The sequence spans 138 residues: Large ribosomal subunit protein uL16c (138 aa).

Belongs to the universal ribosomal protein uL16 family. As to quaternary structure, part of the 50S ribosomal subunit.

The protein localises to the plastid. It localises to the chloroplast. This chain is Large ribosomal subunit protein uL16c, found in Phaeodactylum tricornutum (strain CCAP 1055/1).